The following is a 308-amino-acid chain: Methionyl-tRNA formyltransferase (308 aa).

Position 109-112 (109-112) interacts with (6S)-5,6,7,8-tetrahydrofolate; sequence SLLP.

The protein belongs to the Fmt family.

The enzyme catalyses L-methionyl-tRNA(fMet) + (6R)-10-formyltetrahydrofolate = N-formyl-L-methionyl-tRNA(fMet) + (6S)-5,6,7,8-tetrahydrofolate + H(+). Its function is as follows. Attaches a formyl group to the free amino group of methionyl-tRNA(fMet). The formyl group appears to play a dual role in the initiator identity of N-formylmethionyl-tRNA by promoting its recognition by IF2 and preventing the misappropriation of this tRNA by the elongation apparatus. The chain is Methionyl-tRNA formyltransferase from Salinispora arenicola (strain CNS-205).